Consider the following 1038-residue polypeptide: Translation initiation factor IF-2 (1038 aa).

The tract at residues 48–426 is disordered; it reads DALQGPGGNA…RQRRQEYEAM (379 aa). Positions 58-87 are enriched in low complexity; that stretch reads GKSAAKPGAPRKAAPAKPAAPSPAAAARPA. Pro residues predominate over residues 88–99; the sequence is APKPGAPAPKPA. The span at 100–114 shows a compositional bias: low complexity; that stretch reads EAPSSTPAAPSAPSA. The span at 115–125 shows a compositional bias: pro residues; that stretch reads GPRPGPKPAPK. Low complexity predominate over residues 126-141; sequence AAPVTPVPAAEFSAPA. Positions 142–153 are enriched in pro residues; that stretch reads PAQPAAPQPQAP. Residues 177–199 are compositionally biased toward basic and acidic residues; sequence DGGRDGGQRDGGRGGERGGDRPA. Residues 200–219 are compositionally biased toward low complexity; sequence RPAGQGAPRPGGARPAGPRP. Residues 261 to 277 show a composition bias toward gly residues; that stretch reads SGPGGAPRPQGGQGQGG. Over residues 299 to 315 the composition is skewed to low complexity; it reads GNRPNPGMMPQRPAAGP. Over residues 319–406 the composition is skewed to gly residues; that stretch reads PGGGGRGPGG…GTQGAFGRPG (88 aa). Residues 410–419 are compositionally biased toward basic residues; sequence RRGRKSKRQR. The region spanning 531–703 is the tr-type G domain; the sequence is SRPPVVTVMG…VVLTADASLD (173 aa). The segment at 540 to 547 is G1; sequence GHVDHGKT. 540-547 is a binding site for GTP; it reads GHVDHGKT. The interval 565–569 is G2; that stretch reads GITQH. The tract at residues 590–593 is G3; that stretch reads DTPG. GTP is bound by residues 590–594 and 644–647; these read DTPGH and NKID. Residues 644 to 647 form a G4 region; the sequence is NKID. A G5 region spans residues 680 to 682; sequence SAK.

Belongs to the TRAFAC class translation factor GTPase superfamily. Classic translation factor GTPase family. IF-2 subfamily.

It is found in the cytoplasm. Its function is as follows. One of the essential components for the initiation of protein synthesis. Protects formylmethionyl-tRNA from spontaneous hydrolysis and promotes its binding to the 30S ribosomal subunits. Also involved in the hydrolysis of GTP during the formation of the 70S ribosomal complex. The chain is Translation initiation factor IF-2 from Streptomyces griseus subsp. griseus (strain JCM 4626 / CBS 651.72 / NBRC 13350 / KCC S-0626 / ISP 5235).